The following is a 324-amino-acid chain: Beta-ketoacyl-[acyl-carrier-protein] synthase III (324 aa).

Residues C114 and H246 contribute to the active site. The ACP-binding stretch occupies residues 247-251; sequence QANLR. N276 is an active-site residue.

Belongs to the thiolase-like superfamily. FabH family. Homodimer.

The protein resides in the cytoplasm. It catalyses the reaction malonyl-[ACP] + acetyl-CoA + H(+) = 3-oxobutanoyl-[ACP] + CO2 + CoA. Its pathway is lipid metabolism; fatty acid biosynthesis. In terms of biological role, catalyzes the condensation reaction of fatty acid synthesis by the addition to an acyl acceptor of two carbons from malonyl-ACP. Catalyzes the first condensation reaction which initiates fatty acid synthesis and may therefore play a role in governing the total rate of fatty acid production. Possesses both acetoacetyl-ACP synthase and acetyl transacylase activities. Its substrate specificity determines the biosynthesis of branched-chain and/or straight-chain of fatty acids. The polypeptide is Beta-ketoacyl-[acyl-carrier-protein] synthase III (Campylobacter jejuni subsp. jejuni serotype O:6 (strain 81116 / NCTC 11828)).